We begin with the raw amino-acid sequence, 239 residues long: Ribonuclease 3 (239 aa).

Positions 12-137 (RAKLEALIGH…LIAAIYLDGG (126 aa)) constitute an RNase III domain. Glu-50 is a binding site for Mg(2+). Asp-54 is an active-site residue. 2 residues coordinate Mg(2+): Asp-123 and Glu-126. Glu-126 is a catalytic residue. One can recognise a DRBM domain in the interval 162 to 231 (DAKTELQEWS…ATKMLEREGI (70 aa)).

This sequence belongs to the ribonuclease III family. Homodimer. The cofactor is Mg(2+).

The protein localises to the cytoplasm. It catalyses the reaction Endonucleolytic cleavage to 5'-phosphomonoester.. Its function is as follows. Digests double-stranded RNA. Involved in the processing of primary rRNA transcript to yield the immediate precursors to the large and small rRNAs (23S and 16S). Processes some mRNAs, and tRNAs when they are encoded in the rRNA operon. Processes pre-crRNA and tracrRNA of type II CRISPR loci if present in the organism. The polypeptide is Ribonuclease 3 (Rhizobium etli (strain ATCC 51251 / DSM 11541 / JCM 21823 / NBRC 15573 / CFN 42)).